A 180-amino-acid polypeptide reads, in one-letter code: Large ribosomal subunit protein uL6 (180 aa).

This sequence belongs to the universal ribosomal protein uL6 family. As to quaternary structure, part of the 50S ribosomal subunit.

In terms of biological role, this protein binds to the 23S rRNA, and is important in its secondary structure. It is located near the subunit interface in the base of the L7/L12 stalk, and near the tRNA binding site of the peptidyltransferase center. The sequence is that of Large ribosomal subunit protein uL6 from Picosynechococcus sp. (strain ATCC 27264 / PCC 7002 / PR-6) (Agmenellum quadruplicatum).